The primary structure comprises 226 residues: Agamous-like MADS-box protein AGL23 (226 aa).

Residues 6 to 66 (LGRRKVEIVK…GKVFSFGHPN (61 aa)) form the MADS-box domain. The stretch at 95–132 (VQMLNKSYTEVKAEVEKEQKNKQSRAQNERENENAEEW) forms a coiled coil. Residues 108 to 127 (EVEKEQKNKQSRAQNERENE) show a composition bias toward basic and acidic residues. The tract at residues 108 to 131 (EVEKEQKNKQSRAQNERENENAEE) is disordered.

It is found in the nucleus. Probable transcription factor that controls female gametophyte (megagametogenesis) development and chloroplast biogenesis during embryo development. This is Agamous-like MADS-box protein AGL23 from Arabidopsis thaliana (Mouse-ear cress).